We begin with the raw amino-acid sequence, 252 residues long: Geranylgeranylglyceryl phosphate synthase (252 aa).

The Mg(2+) site is built by D26 and S55. Sn-glycerol 1-phosphate is bound by residues 174-180, 205-206, and 227-228; these read YLEAGSG, GG, and GT.

The protein belongs to the GGGP/HepGP synthase family. Group II subfamily. Mg(2+) is required as a cofactor.

The protein localises to the cytoplasm. The enzyme catalyses sn-glycerol 1-phosphate + (2E,6E,10E)-geranylgeranyl diphosphate = sn-3-O-(geranylgeranyl)glycerol 1-phosphate + diphosphate. It participates in membrane lipid metabolism; glycerophospholipid metabolism. Functionally, prenyltransferase that catalyzes the transfer of the geranylgeranyl moiety of geranylgeranyl diphosphate (GGPP) to the C3 hydroxyl of sn-glycerol-1-phosphate (G1P). This reaction is the first ether-bond-formation step in the biosynthesis of archaeal membrane lipids. In Thermococcus gammatolerans (strain DSM 15229 / JCM 11827 / EJ3), this protein is Geranylgeranylglyceryl phosphate synthase.